A 107-amino-acid chain; its full sequence is uncharacterized protein (107 aa).

The Glutaredoxin domain occupies 6 to 107 (KARIDQLVTA…QEMLEVALAS (102 aa)). Residue Lys23 participates in glutathione binding. Position 31 (Cys31) interacts with [2Fe-2S] cluster. Residues Arg60 and 85–86 (SD) each bind glutathione.

This sequence belongs to the glutaredoxin family. Monothiol subfamily.

This is an uncharacterized protein from Synechocystis sp. (strain ATCC 27184 / PCC 6803 / Kazusa).